Consider the following 561-residue polypeptide: Acylcarnitine hydrolase (561 aa).

Residues 1-26 form the signal peptide; the sequence is MARKQPHSWLNAVLFGLLLILIHVWG. A disulfide bond links C97 and C125. The active-site Acyl-ester intermediate is the S230. The cysteines at positions 282 and 293 are disulfide-linked. Catalysis depends on charge relay system residues E347 and H459.

Belongs to the type-B carboxylesterase/lipase family. In terms of tissue distribution, expressed in liver, stomach and kidney.

The protein resides in the microsome. Its subcellular location is the endoplasmic reticulum. It carries out the reaction all-trans-retinyl hexadecanoate + H2O = all-trans-retinol + hexadecanoate + H(+). It catalyses the reaction an O-acyl-(R)-carnitine + H2O = (R)-carnitine + a fatty acid + H(+). Functionally, hydrolase with high activity towards palmitoylcarnitine. Is also active with p-nitrophenylacetate and alpha-naphthylacetate. May also hydrolyze retinyl esters. The polypeptide is Acylcarnitine hydrolase (Rattus norvegicus (Rat)).